The following is a 200-amino-acid chain: Putative manganese exporter (200 aa).

6 helical membrane passes run 13 to 33 (TEHV…AEIG), 53 to 73 (IIAA…WLGV), 81 to 101 (PDIL…WILI), 110 to 130 (SIST…AEIG), 150 to 170 (WVIV…VLIG), and 180 to 200 (GLIR…TAFF).

It belongs to the GDT1 family.

Its subcellular location is the cell inner membrane. In terms of biological role, involved in manganese homeostasis. May function as a manganese exporter. The chain is Putative manganese exporter from Vibrio cholerae serotype O1 (strain ATCC 39541 / Classical Ogawa 395 / O395).